A 478-amino-acid polypeptide reads, in one-letter code: Sulfate adenylyltransferase subunit 1 (478 aa).

A tr-type G domain is found at 24–240 (KSLLRFLTCG…VLENVDIDAD (217 aa)). Positions 33–40 (GSVDDGKS) are G1. 33–40 (GSVDDGKS) serves as a coordination point for GTP. Positions 91–95 (GITID) are G2. A G3 region spans residues 112–115 (DTPG). Residues 112-116 (DTPGH) and 167-170 (NKMD) contribute to the GTP site. The tract at residues 167-170 (NKMD) is G4. Residues 206 to 208 (SAL) form a G5 region.

It belongs to the TRAFAC class translation factor GTPase superfamily. Classic translation factor GTPase family. CysN/NodQ subfamily. As to quaternary structure, heterodimer composed of CysD, the smaller subunit, and CysN.

It carries out the reaction sulfate + ATP + H(+) = adenosine 5'-phosphosulfate + diphosphate. It functions in the pathway sulfur metabolism; hydrogen sulfide biosynthesis; sulfite from sulfate: step 1/3. With CysD forms the ATP sulfurylase (ATPS) that catalyzes the adenylation of sulfate producing adenosine 5'-phosphosulfate (APS) and diphosphate, the first enzymatic step in sulfur assimilation pathway. APS synthesis involves the formation of a high-energy phosphoric-sulfuric acid anhydride bond driven by GTP hydrolysis by CysN coupled to ATP hydrolysis by CysD. This chain is Sulfate adenylyltransferase subunit 1, found in Aliivibrio fischeri (strain ATCC 700601 / ES114) (Vibrio fischeri).